Consider the following 196-residue polypeptide: HTH-type transcriptional regulator BetI (196 aa).

One can recognise an HTH tetR-type domain in the interval 8–68 (PVRREQLIRA…AAMRQILREL (61 aa)). Residues 31–50 (TVATIAKKAGLSSGIVAHYF) constitute a DNA-binding region (H-T-H motif).

It functions in the pathway amine and polyamine biosynthesis; betaine biosynthesis via choline pathway [regulation]. In terms of biological role, repressor involved in the biosynthesis of the osmoprotectant glycine betaine. It represses transcription of the choline transporter BetT and the genes of BetAB involved in the synthesis of glycine betaine. The polypeptide is HTH-type transcriptional regulator BetI (Stenotrophomonas maltophilia (strain R551-3)).